The sequence spans 47 residues: SCFEGGKDCKNDCQCCGKWSYCKCPIWGLFGCSCVIGDSMVEVRKCQ.

5 cysteine pairs are disulfide-bonded: cysteine 2-cysteine 16, cysteine 9-cysteine 22, cysteine 13-cysteine 46, cysteine 15-cysteine 34, and cysteine 24-cysteine 32.

As to expression, expressed by the venom gland.

The protein localises to the secreted. Neurotoxin. Causes spastic paralysis and death in mice by intracerebroventricular injection at dose levels of 3 ug per mouse. This chain is U18-ctenitoxin-Pn1a, found in Phoneutria nigriventer (Brazilian armed spider).